A 1212-amino-acid chain; its full sequence is uncharacterized protein (1212 aa).

Residues 783–802 form a disordered region; the sequence is TRQDASGGSSSGTKKGEKLQ.

This is an uncharacterized protein from Human herpesvirus 6B (strain Z29) (HHV-6 variant B).